The following is a 301-amino-acid chain: Hydroxyquinol 1,2-dioxygenase (301 aa).

Residues tyrosine 169, tyrosine 202, histidine 226, and histidine 228 each coordinate Fe cation.

The protein belongs to the intradiol ring-cleavage dioxygenase family. Requires Fe(3+) as cofactor.

The enzyme catalyses benzene-1,2,4-triol + O2 = maleylacetate + 2 H(+). Its pathway is aromatic compound metabolism. Functionally, involved in resorcinol degradation. Catalyzes the conversion of hydroxyquinol to malelylacetate. Also shows weak activity with catechol, 3-methylcatechol and 4-methylcatechol, but cannot use 4-chlorocatechol, 4-nitrocatechol or protocatechuate. This is Hydroxyquinol 1,2-dioxygenase from Corynebacterium glutamicum (strain ATCC 13032 / DSM 20300 / JCM 1318 / BCRC 11384 / CCUG 27702 / LMG 3730 / NBRC 12168 / NCIMB 10025 / NRRL B-2784 / 534).